Here is a 310-residue protein sequence, read N- to C-terminus: Coproporphyrin III ferrochelatase (310 aa).

Fe-coproporphyrin III is bound by residues Tyr13, Arg30, 46–47 (RY), Ser54, and Tyr125. His183 and Glu264 together coordinate Fe(2+).

It belongs to the ferrochelatase family.

It localises to the cytoplasm. It carries out the reaction Fe-coproporphyrin III + 2 H(+) = coproporphyrin III + Fe(2+). The protein operates within porphyrin-containing compound metabolism; protoheme biosynthesis. In terms of biological role, involved in coproporphyrin-dependent heme b biosynthesis. Catalyzes the insertion of ferrous iron into coproporphyrin III to form Fe-coproporphyrin III. The sequence is that of Coproporphyrin III ferrochelatase from Geobacillus sp. (strain WCH70).